Reading from the N-terminus, the 55-residue chain is Large ribosomal subunit protein bL33m (55 aa).

Belongs to the bacterial ribosomal protein bL33 family. As to quaternary structure, component of the mitochondrial large ribosomal subunit (mt-LSU). Mature yeast 74S mitochondrial ribosomes consist of a small (37S) and a large (54S) subunit. The 37S small subunit contains a 15S ribosomal RNA (15S mt-rRNA) and at least 32 different proteins. The 54S large subunit contains a 21S rRNA (21S mt-rRNA) and at least 45 different proteins. bL33m stabilizes the tRNA acceptor stem in the E-site.

Its subcellular location is the mitochondrion. Component of the mitochondrial ribosome (mitoribosome), a dedicated translation machinery responsible for the synthesis of mitochondrial genome-encoded proteins, including at least some of the essential transmembrane subunits of the mitochondrial respiratory chain. The mitoribosomes are attached to the mitochondrial inner membrane and translation products are cotranslationally integrated into the membrane. This Schizosaccharomyces pombe (strain 972 / ATCC 24843) (Fission yeast) protein is Large ribosomal subunit protein bL33m (mrpl39).